The chain runs to 278 residues: Cation-dependent mannose-6-phosphate receptor (278 aa).

The signal sequence occupies residues methionine 1–alanine 21. Residues valine 22–histidine 186 are Lumenal-facing. In terms of domain architecture, MRH spans lysine 31–proline 182. The cysteines at positions 33 and 79 are disulfide-linked. Asparagine 58, asparagine 84, asparagine 95, asparagine 108, and asparagine 114 each carry an N-linked (GlcNAc...) asparagine glycan. 2 disulfides stabilise this stretch: cysteine 133–cysteine 168 and cysteine 146–cysteine 180. The chain crosses the membrane as a helical span at residues leucine 187–tyrosine 211. Over glutamine 212–methionine 278 the chain is Cytoplasmic. The tract at residues arginine 257–methionine 278 is disordered. Serine 268 is subject to Phosphoserine.

Homodimer. Binds GGA1, GGA2 and GGA3.

Its subcellular location is the lysosome membrane. In terms of biological role, transport of phosphorylated lysosomal enzymes from the Golgi complex and the cell surface to lysosomes. Lysosomal enzymes bearing phosphomannosyl residues bind specifically to mannose-6-phosphate receptors in the Golgi apparatus and the resulting receptor-ligand complex is transported to an acidic prelyosomal compartment where the low pH mediates the dissociation of the complex. In Mus musculus (Mouse), this protein is Cation-dependent mannose-6-phosphate receptor (M6pr).